The sequence spans 285 residues: Polyamine aminopropyltransferase (285 aa).

Residues 2–237 (DLWFSESHTP…GYWCFGFASK (236 aa)) form the PABS domain. Q31 lines the S-methyl-5'-thioadenosine pocket. Residue D86 participates in spermidine binding. Residues E106 and 137–138 (DG) contribute to the S-methyl-5'-thioadenosine site. Catalysis depends on D155, which acts as the Proton acceptor.

The protein belongs to the spermidine/spermine synthase family. As to quaternary structure, homodimer or homotetramer.

The protein resides in the cytoplasm. The catalysed reaction is S-adenosyl 3-(methylsulfanyl)propylamine + putrescine = S-methyl-5'-thioadenosine + spermidine + H(+). The protein operates within amine and polyamine biosynthesis; spermidine biosynthesis; spermidine from putrescine: step 1/1. Catalyzes the irreversible transfer of a propylamine group from the amino donor S-adenosylmethioninamine (decarboxy-AdoMet) to putrescine (1,4-diaminobutane) to yield spermidine. The sequence is that of Polyamine aminopropyltransferase from Streptococcus uberis (strain ATCC BAA-854 / 0140J).